The primary structure comprises 260 residues: uncharacterized protein (260 aa).

A signal peptide spans 1–22 (MGYLKGFALYISILILIVFIAG). Cys-23 carries N-palmitoyl cysteine lipidation. A lipid anchor (S-diacylglycerol cysteine) is attached at Cys-23.

It belongs to the staphylococcal tandem lipoprotein family.

It is found in the cell membrane. This is an uncharacterized protein from Staphylococcus aureus (strain MSSA476).